Here is a 394-residue protein sequence, read N- to C-terminus: Chorismate synthase (394 aa).

The NADP(+) site is built by Arg42 and Arg48. Residues Arg137–Ser139, Gln258–Ala259, Gly302, Lys317–Thr321, and Arg343 each bind FMN.

This sequence belongs to the chorismate synthase family. As to quaternary structure, homotetramer. FMNH2 is required as a cofactor.

The catalysed reaction is 5-O-(1-carboxyvinyl)-3-phosphoshikimate = chorismate + phosphate. It participates in metabolic intermediate biosynthesis; chorismate biosynthesis; chorismate from D-erythrose 4-phosphate and phosphoenolpyruvate: step 7/7. Catalyzes the anti-1,4-elimination of the C-3 phosphate and the C-6 proR hydrogen from 5-enolpyruvylshikimate-3-phosphate (EPSP) to yield chorismate, which is the branch point compound that serves as the starting substrate for the three terminal pathways of aromatic amino acid biosynthesis. This reaction introduces a second double bond into the aromatic ring system. The polypeptide is Chorismate synthase (Streptomyces coelicolor (strain ATCC BAA-471 / A3(2) / M145)).